The sequence spans 127 residues: Ribonuclease P protein component 1 (127 aa).

The protein belongs to the eukaryotic/archaeal RNase P protein component 1 family. As to quaternary structure, consists of a catalytic RNA component and at least 5 protein subunits. Forms a heterodimeric subcomplex with Rnp4. Reconstituted enzyme missing individual protein subunits is suboptimally active, showing each subunit contributes to optimization of activity.

It is found in the cytoplasm. It carries out the reaction Endonucleolytic cleavage of RNA, removing 5'-extranucleotides from tRNA precursor.. Its function is as follows. Part of ribonuclease P (RNase P), a protein complex that generates mature tRNA molecules by cleaving their 5'-ends. Binds RNase P RNA. The polypeptide is Ribonuclease P protein component 1 (Pyrococcus horikoshii (strain ATCC 700860 / DSM 12428 / JCM 9974 / NBRC 100139 / OT-3)).